The sequence spans 800 residues: MQMQVLTAASSLPRATLLRPAAAEPWRQSFLQLQARPIQRPGIMLHCKAQLQGQETRERRQLDDDEHARPPQGGDDDVAASTSELPYMIESIKSKLRAARNSLGETTVSAYDTAWIALVNRLDGGGERSPQFPEAIDWIARNQLPDGSWGDAGMFIVQDRLINTLGCVVALATWGVHEEQRARGLAYIQDNLWRLGEDDEEWMMVGFEITFPVLLEKAKNLGLDINYDDPALQDIYAKRQLKLAKIPREALHARPTTLLHSLEGMENLDWERLLQFKCPAGSLHSSPAASAYALSETGDKELLEYLETAINNFDGGAPCTYPVDNFDRLWSVDRLRRLGISRYFTSEIEEYLEYAYRHLSPDGMSYGGLCPVKDIDDTAMAFRLLRLHGYNVSSSVFNHFEKDGEYFCFAGQSSQSLTAMYNSYRASQIVFPGDDDGLEQLRAYCRAFLEERRATGNLMDKWVIANGLPSEVEYALDFPWKASLPRVETRVYLEQYGASEDAWIGKGLYRMTLVNNDLYLEAAKADFTNFQRLSRLEWLSLKRWYIRNNLQAHGVTEQSVLRAYFLAAANIFEPNRAAERLGWARTAILAEAIASHLRQYSANGAADGMTERLISGLASHDWDWRESKDSAARSLLYALDELIDLHAFGNASDSLREAWKQWLMSWTNESQGSTGGDTALLLVRTIEICSGRHGSAEQSLKNSADYARLEQIASSMCSKLATKILAQNGGSMDNVEGIDQEVDVEMKELIQRVYGSSSNDVSSVTRQTFLDVVKSFCYVAHCSPETIDGHISKVLFEDVN.

Residues 1-47 constitute a chloroplast transit peptide; sequence MQMQVLTAASSLPRATLLRPAAAEPWRQSFLQLQARPIQRPGIMLHC. Residues 52–80 form a disordered region; that stretch reads QGQETRERRQLDDDEHARPPQGGDDDVAA. The segment covering 55-69 has biased composition (basic and acidic residues); it reads ETRERRQLDDDEHAR. Substrate is bound at residue K242. The Mg(2+) site is built by D374 and D376. Residues 374–377 carry the DXDD motif motif; it reads DIDD. K461 contributes to the substrate binding site.

This sequence belongs to the terpene synthase family. Requires Mg(2+) as cofactor.

The protein localises to the plastid. It is found in the chloroplast. The catalysed reaction is (2E,6E,10E)-geranylgeranyl diphosphate = ent-copalyl diphosphate. It participates in secondary metabolite biosynthesis; terpenoid biosynthesis. Functionally, catalyzes the conversion of geranylgeranyl diphosphate to the phytoalexin precursor ent-copalyl diphosphate. The protein is Ent-copalyl diphosphate synthase 2, chloroplastic of Oryza sativa subsp. japonica (Rice).